A 389-amino-acid chain; its full sequence is 3-ketoacyl-CoA thiolase (389 aa).

Cysteine 91 (acyl-thioester intermediate) is an active-site residue. Catalysis depends on proton acceptor residues histidine 343 and cysteine 373.

The protein belongs to the thiolase-like superfamily. Thiolase family. As to quaternary structure, heterotetramer of two alpha chains (FadB) and two beta chains (FadA).

The protein resides in the cytoplasm. The catalysed reaction is an acyl-CoA + acetyl-CoA = a 3-oxoacyl-CoA + CoA. Its pathway is lipid metabolism; fatty acid beta-oxidation. Catalyzes the final step of fatty acid oxidation in which acetyl-CoA is released and the CoA ester of a fatty acid two carbons shorter is formed. This Citrobacter koseri (strain ATCC BAA-895 / CDC 4225-83 / SGSC4696) protein is 3-ketoacyl-CoA thiolase.